A 119-amino-acid polypeptide reads, in one-letter code: Ribosome-binding factor A (119 aa).

The protein belongs to the RbfA family. In terms of assembly, monomer. Binds 30S ribosomal subunits, but not 50S ribosomal subunits or 70S ribosomes.

The protein resides in the cytoplasm. In terms of biological role, one of several proteins that assist in the late maturation steps of the functional core of the 30S ribosomal subunit. Associates with free 30S ribosomal subunits (but not with 30S subunits that are part of 70S ribosomes or polysomes). Required for efficient processing of 16S rRNA. May interact with the 5'-terminal helix region of 16S rRNA. In Coxiella burnetii (strain CbuK_Q154) (Coxiella burnetii (strain Q154)), this protein is Ribosome-binding factor A.